A 488-amino-acid chain; its full sequence is Glutamyl-tRNA(Gln) amidotransferase subunit A (488 aa).

Catalysis depends on charge relay system residues lysine 78 and serine 153. Serine 177 serves as the catalytic Acyl-ester intermediate.

Belongs to the amidase family. GatA subfamily. As to quaternary structure, heterotrimer of A, B and C subunits.

It catalyses the reaction L-glutamyl-tRNA(Gln) + L-glutamine + ATP + H2O = L-glutaminyl-tRNA(Gln) + L-glutamate + ADP + phosphate + H(+). In terms of biological role, allows the formation of correctly charged Gln-tRNA(Gln) through the transamidation of misacylated Glu-tRNA(Gln) in organisms which lack glutaminyl-tRNA synthetase. The reaction takes place in the presence of glutamine and ATP through an activated gamma-phospho-Glu-tRNA(Gln). This chain is Glutamyl-tRNA(Gln) amidotransferase subunit A, found in Thermoanaerobacter pseudethanolicus (strain ATCC 33223 / 39E) (Clostridium thermohydrosulfuricum).